We begin with the raw amino-acid sequence, 326 residues long: Putative ribose-phosphate pyrophosphokinase 2 (326 aa).

ATP is bound by residues 43–45 and 102–103; these read DGE and RQ. His-136 provides a ligand contact to Mg(2+). Residues Asp-225 and 229 to 233 contribute to the D-ribose 5-phosphate site; that span reads NTGKT.

Belongs to the ribose-phosphate pyrophosphokinase family. Class I subfamily. Homohexamer. The cofactor is Mg(2+).

It is found in the cytoplasm. The enzyme catalyses D-ribose 5-phosphate + ATP = 5-phospho-alpha-D-ribose 1-diphosphate + AMP + H(+). The protein operates within metabolic intermediate biosynthesis; 5-phospho-alpha-D-ribose 1-diphosphate biosynthesis; 5-phospho-alpha-D-ribose 1-diphosphate from D-ribose 5-phosphate (route I): step 1/1. Functionally, involved in the biosynthesis of the central metabolite phospho-alpha-D-ribosyl-1-pyrophosphate (PRPP) via the transfer of pyrophosphoryl group from ATP to 1-hydroxyl of ribose-5-phosphate (Rib-5-P). This is Putative ribose-phosphate pyrophosphokinase 2 from Streptococcus pyogenes serotype M18 (strain MGAS8232).